Consider the following 326-residue polypeptide: DNA-directed RNA polymerase subunit alpha (326 aa).

The segment at 1 to 231 is alpha N-terminal domain (alpha-NTD); it reads MQTALLKPKI…DQLSVFAALE (231 aa). The tract at residues 247–326 is alpha C-terminal domain (alpha-CTD); that stretch reads IDPILLRPVD…ENWPPAGLEK (80 aa).

The protein belongs to the RNA polymerase alpha chain family. Homodimer. The RNAP catalytic core consists of 2 alpha, 1 beta, 1 beta' and 1 omega subunit. When a sigma factor is associated with the core the holoenzyme is formed, which can initiate transcription.

The enzyme catalyses RNA(n) + a ribonucleoside 5'-triphosphate = RNA(n+1) + diphosphate. Functionally, DNA-dependent RNA polymerase catalyzes the transcription of DNA into RNA using the four ribonucleoside triphosphates as substrates. This chain is DNA-directed RNA polymerase subunit alpha, found in Ralstonia nicotianae (strain ATCC BAA-1114 / GMI1000) (Ralstonia solanacearum).